Reading from the N-terminus, the 501-residue chain is LIM domain-containing protein HDR3 (501 aa).

The segment at 33-67 (GEANRRRPRVTAGEETTLWEEPVRPKKEEPPRHNN) is disordered. Basic and acidic residues predominate over residues 53 to 67 (EPVRPKKEEPPRHNN). 2 UIM domains span residues 65–84 (HNNEEMDHALALALADDAKN) and 94–113 (ENDEELARAIQDSLNMNPYQ). The region spanning 131-191 (RVCGGCKHEI…KLCYKELHHP (61 aa)) is the LIM zinc-binding domain. Residues 429 to 448 (YASSSSSSCRPPPSKKGGIS) are disordered.

Interacts (via N-terminus) with GW6A (via C-terminus).

Ubiquitin receptor that functions as a positive regulator of grain size and weight. Functions in the same genetic pathway as GW6A to regulate grain size. Modulates grain size in a similar manner to GW6A, by altering cell proliferation in spikelet hulls. Interacts with and enhances the ubiquitination of GW6A. This stabilizes GW6A, delays protein degradation by the 26S proteasome and enhances GW6A histone acetyltransferase activity. The sequence is that of LIM domain-containing protein HDR3 from Oryza sativa subsp. japonica (Rice).